We begin with the raw amino-acid sequence, 440 residues long: Probable cytosolic iron-sulfur protein assembly protein 1 (440 aa).

WD repeat units follow at residues 12–51 (AHAEPAWTVSFNPTRSLLASCSTDRTIRLYSYIIPSSSDG), 71–110 (DHKRTVRSIAWSPDGRTLASGSFDSTVGVWEEVIPLSDDE), 148–187 (GHESECKSVGFSSDGALLASCSRDKSVWVWEVQPDADFEC), 193–233 (EHSQ…WCIF), 278–317 (EEDETVWCLAWSPDGRWLASGGDNGGIRLWQRTGSQPDSA), 326–379 (AHSR…SPSS), and 401–440 (HGVNDINSVAWCVREDKKGWGMLSSAGDDGSVKVWRVVRD). The span at 107–116 (SDDEEEEDEG) shows a compositional bias: acidic residues. Positions 107-137 (SDDEEEEDEGAQGVYKPAGVDSDGDGDGGKE) are disordered.

It belongs to the WD repeat CIA1 family.

In terms of biological role, essential component of the cytosolic iron-sulfur (Fe/S) protein assembly machinery. Required for the maturation of extramitochondrial Fe/S proteins. In Cryptococcus neoformans var. neoformans serotype D (strain B-3501A) (Filobasidiella neoformans), this protein is Probable cytosolic iron-sulfur protein assembly protein 1.